Here is a 186-residue protein sequence, read N- to C-terminus: Protein GrpE (186 aa).

Residues 1 to 15 show a composition bias toward polar residues; sequence MADEQQTLDQQTPEQ. The disordered stretch occupies residues 1–20; it reads MADEQQTLDQQTPEQPTGAA.

It belongs to the GrpE family. In terms of assembly, homodimer.

The protein localises to the cytoplasm. Functionally, participates actively in the response to hyperosmotic and heat shock by preventing the aggregation of stress-denatured proteins, in association with DnaK and GrpE. It is the nucleotide exchange factor for DnaK and may function as a thermosensor. Unfolded proteins bind initially to DnaJ; upon interaction with the DnaJ-bound protein, DnaK hydrolyzes its bound ATP, resulting in the formation of a stable complex. GrpE releases ADP from DnaK; ATP binding to DnaK triggers the release of the substrate protein, thus completing the reaction cycle. Several rounds of ATP-dependent interactions between DnaJ, DnaK and GrpE are required for fully efficient folding. The protein is Protein GrpE of Pseudomonas aeruginosa (strain UCBPP-PA14).